The chain runs to 243 residues: Probable transcriptional regulatory protein Athe_0816 (243 aa).

The protein belongs to the TACO1 family.

It is found in the cytoplasm. This Caldicellulosiruptor bescii (strain ATCC BAA-1888 / DSM 6725 / KCTC 15123 / Z-1320) (Anaerocellum thermophilum) protein is Probable transcriptional regulatory protein Athe_0816.